Here is a 161-residue protein sequence, read N- to C-terminus: Regulator of ribonuclease activity A (161 aa).

This sequence belongs to the RraA family. Homotrimer. Binds to both RNA-binding sites in the C-terminal region of Rne and to RhlB.

It localises to the cytoplasm. Its function is as follows. Globally modulates RNA abundance by binding to RNase E (Rne) and regulating its endonucleolytic activity. Can modulate Rne action in a substrate-dependent manner by altering the composition of the degradosome. Modulates RNA-binding and helicase activities of the degradosome. The chain is Regulator of ribonuclease activity A from Edwardsiella ictaluri (strain 93-146).